The chain runs to 524 residues: Lysine--tRNA ligase (524 aa).

Positions 39 to 47 match the 'HIGH' region motif; that stretch reads ASGIPHMGS. Residues 294–298 carry the 'KMSKS' region motif; the sequence is KISKS. Lys-297 is a binding site for ATP.

It belongs to the class-I aminoacyl-tRNA synthetase family.

The protein resides in the cytoplasm. The catalysed reaction is tRNA(Lys) + L-lysine + ATP = L-lysyl-tRNA(Lys) + AMP + diphosphate. In Cenarchaeum symbiosum, this protein is Lysine--tRNA ligase (lysS).